The primary structure comprises 502 residues: Mannitol 2-dehydrogenase (502 aa).

An NAD(+)-binding site is contributed by 37–48 (IVHVGVGGFHRA).

Belongs to the mannitol dehydrogenase family. As to quaternary structure, monomer.

It catalyses the reaction D-mannitol + NAD(+) = D-fructose + NADH + H(+). In terms of biological role, catalyzes the NAD(H)-dependent interconversion of D-fructose and D-mannitol in the mannitol metabolic pathway. The protein is Mannitol 2-dehydrogenase of Aspergillus oryzae (strain ATCC 42149 / RIB 40) (Yellow koji mold).